The following is a 149-amino-acid chain: 3-hydroxyacyl-[acyl-carrier-protein] dehydratase FabZ (149 aa).

His-47 is a catalytic residue.

The protein belongs to the thioester dehydratase family. FabZ subfamily.

The protein localises to the cytoplasm. It carries out the reaction a (3R)-hydroxyacyl-[ACP] = a (2E)-enoyl-[ACP] + H2O. In terms of biological role, involved in unsaturated fatty acids biosynthesis. Catalyzes the dehydration of short chain beta-hydroxyacyl-ACPs and long chain saturated and unsaturated beta-hydroxyacyl-ACPs. The sequence is that of 3-hydroxyacyl-[acyl-carrier-protein] dehydratase FabZ from Thioalkalivibrio sulfidiphilus (strain HL-EbGR7).